A 316-amino-acid chain; its full sequence is N-acetylmuramic acid 6-phosphate etherase (316 aa).

Positions 1 to 25 (MAVFDPDLQPSSDRGHLLTEQSNQR) are disordered. The SIS domain maps to 66-229 (VANRLRAGGR…STAVMVKLGK (164 aa)). Glu-94 serves as the catalytic Proton donor. Residue Glu-125 is part of the active site.

The protein belongs to the GCKR-like family. MurNAc-6-P etherase subfamily. Homodimer.

The catalysed reaction is N-acetyl-D-muramate 6-phosphate + H2O = N-acetyl-D-glucosamine 6-phosphate + (R)-lactate. The protein operates within amino-sugar metabolism; N-acetylmuramate degradation. Its function is as follows. Specifically catalyzes the cleavage of the D-lactyl ether substituent of MurNAc 6-phosphate, producing GlcNAc 6-phosphate and D-lactate. The polypeptide is N-acetylmuramic acid 6-phosphate etherase (Synechococcus sp. (strain CC9605)).